We begin with the raw amino-acid sequence, 406 residues long: Putative permease Rv2963 (406 aa).

The next 9 membrane-spanning stretches (helical) occupy residues 30–50, 67–87, 111–131, 132–152, 208–228, 246–266, 278–298, 312–332, and 361–381; these read WEILWALILGFALSAVVQAVV, LVIATGLGAASSSCSYAAVAL, LVVELGIILALLMGWQFTAAE, FVGGPIMILVLAVLFRLFVGA, LAILRDLILGLLIAGAIAAWV, AVWGPIIGPIVAIVSFVCSIG, GISFGGVIAFIFADLLILPIL, VLLGTFYASMVVAGYLIELLF, and VIFLVIAAALVVRFITSGGLP.

It belongs to the UPF0718 family.

The protein localises to the cell membrane. The polypeptide is Putative permease Rv2963 (Mycobacterium tuberculosis (strain ATCC 25618 / H37Rv)).